The primary structure comprises 1128 residues: Phytochrome A (1128 aa).

The segment covering 1–21 (MSSSRPTQCSSSSSRTRQSSR) has biased composition (low complexity). Positions 1 to 24 (MSSSRPTQCSSSSSRTRQSSRARI) are disordered. In terms of domain architecture, GAF spans 219–404 (SMEVLCNTVV…VFAVHVNKEF (186 aa)). Cys324 contacts phytochromobilin. PAS domains lie at 620–690 (VTSE…LQGK) and 750–834 (VEGD…LAGD). Residues 904–1124 (YMRHAINNPL…TFILSVELAS (221 aa)) form the Histidine kinase domain.

It belongs to the phytochrome family. In terms of assembly, homodimer. In terms of processing, contains one covalently linked phytochromobilin chromophore.

Regulatory photoreceptor which exists in two forms that are reversibly interconvertible by light: the Pr form that absorbs maximally in the red region of the spectrum and the Pfr form that absorbs maximally in the far-red region. Photoconversion of Pr to Pfr induces an array of morphogenic responses, whereas reconversion of Pfr to Pr cancels the induction of those responses. Pfr controls the expression of a number of nuclear genes including those encoding the small subunit of ribulose-bisphosphate carboxylase, chlorophyll A/B binding protein, protochlorophyllide reductase, rRNA, etc. It also controls the expression of its own gene(s) in a negative feedback fashion. This chain is Phytochrome A (PHYA), found in Oryza sativa subsp. indica (Rice).